Here is a 2240-residue protein sequence, read N- to C-terminus: Nonribisomal peptide synthetase notE (2240 aa).

Positions 22–52 are disordered; sequence TETMRETLSSSSSPLSLSSITSPLSSASEPP. Residues 28–52 are compositionally biased toward low complexity; sequence TLSSSSSPLSLSSITSPLSSASEPP. The adenylation 1 stretch occupies residues 85 to 484; the sequence is QQRCREAPES…GRKEGQVKIR (400 aa). The region spanning 616 to 692 is the Carrier 1 domain; it reads PPTTATEHAL…EQARKATPVS (77 aa). Residue serine 653 is modified to O-(pantetheine 4'-phosphoryl)serine. Residues 732 to 1144 form a condensation 1 region; that stretch reads EDIFPCTPLQ…DFASPQDRDL (413 aa). The interval 1167-1564 is adenylation 2; it reads QEARQPSREA…GRRDTQLKLR (398 aa). The Carrier 2 domain maps to 1700-1776; that stretch reads PVSRGPELRL…ELARCTGEEP (77 aa). O-(pantetheine 4'-phosphoryl)serine is present on serine 1737. The tract at residues 1845–2159 is condensation 2; the sequence is FSFHGEVSVE…ILQHQNIDMD (315 aa). The segment at 2008–2027 is disordered; sequence CTMPVKATPPTDSDDSRPSA.

The protein belongs to the NRP synthetase family.

The enzyme catalyses L-proline + L-tryptophan + 2 ATP = brevianamide F + 2 AMP + 2 diphosphate + 2 H(+). It functions in the pathway alkaloid biosynthesis. In terms of biological role, nonribisomal peptide synthetase; part of the gene cluster that mediates the biosynthesis of notoamide, a fungal indole alkaloid that belongs to a family of natural products containing a characteristic bicyclo[2.2.2]diazaoctane core. The first step of notoamide biosynthesis involves coupling of L-proline and L-tryptophan by the bimodular NRPS notE, to produce cyclo-L-tryptophan-L-proline called brevianamide F. The reverse prenyltransferase notF then acts as a deoxybrevianamide E synthase and converts brevianamide F to deoxybrevianamide E via reverse prenylation at C-2 of the indole ring leading to the bicyclo[2.2.2]diazaoctane core. Deoxybrevianamide E is further hydroxylated at C-6 of the indole ring, likely catalyzed by the cytochrome P450 monooxygenase notG, to yield 6-hydroxy-deoxybrevianamide E. 6-hydroxy-deoxybrevianamide E is a specific substrate of the prenyltransferase notC for normal prenylation at C-7 to produce 6-hydroxy-7-prenyl-deoxybrevianamide, also called notoamide S. As the proposed pivotal branching point in notoamide biosynthesis, notoamide S can be diverted to notoamide E through an oxidative pyran ring closure putatively catalyzed by either notH cytochrome P450 monooxygenase or the notD FAD-linked oxidoreductase. This step would be followed by an indole 2,3-epoxidation-initiated pinacol-like rearrangement catalyzed by the notB FAD-dependent monooxygenase leading to the formation of notoamide C and notoamide D. On the other hand notoamide S is converted to notoamide T by notH (or notD), a bifunctional oxidase that also functions as the intramolecular Diels-Alderase responsible for generation of (+)-notoamide T. To generate antipodal (-)-notoaminide T, notH' (or notD') in Aspergillus versicolor is expected to catalyze a Diels-Alder reaction leading to the opposite stereochemistry. The remaining oxidoreductase notD (or notH) likely catalyzes the oxidative pyran ring formation to yield (+)-stephacidin A. The FAD-dependent monooxygenase notI is highly similar to notB and is predicted to catalyze a similar conversion from (+)-stephacidin A to (-)-notoamide B via the 2,3-epoxidation of (+)-stephacidin A followed by a pinacol-type rearrangement. Finally, it remains unclear which enzyme could be responsible for the final hydroxylation steps leading to notoamide A and sclerotiamide. This chain is Nonribisomal peptide synthetase notE, found in Aspergillus sp. (strain MF297-2).